A 415-amino-acid polypeptide reads, in one-letter code: Multifunctional CCA protein (415 aa).

G8 and R11 together coordinate ATP. 2 residues coordinate CTP: G8 and R11. Mg(2+)-binding residues include D21 and D23. R91, R143, and R146 together coordinate ATP. Residues R91, R143, and R146 each contribute to the CTP site. Residues 232 to 333 (TGVHVMMVID…TRLLERCDAL (102 aa)) form the HD domain.

It belongs to the tRNA nucleotidyltransferase/poly(A) polymerase family. Bacterial CCA-adding enzyme type 1 subfamily. As to quaternary structure, monomer. Can also form homodimers and oligomers. Mg(2+) is required as a cofactor. It depends on Ni(2+) as a cofactor.

The enzyme catalyses a tRNA precursor + 2 CTP + ATP = a tRNA with a 3' CCA end + 3 diphosphate. It catalyses the reaction a tRNA with a 3' CCA end + 2 CTP + ATP = a tRNA with a 3' CCACCA end + 3 diphosphate. Catalyzes the addition and repair of the essential 3'-terminal CCA sequence in tRNAs without using a nucleic acid template. Adds these three nucleotides in the order of C, C, and A to the tRNA nucleotide-73, using CTP and ATP as substrates and producing inorganic pyrophosphate. tRNA 3'-terminal CCA addition is required both for tRNA processing and repair. Also involved in tRNA surveillance by mediating tandem CCA addition to generate a CCACCA at the 3' terminus of unstable tRNAs. While stable tRNAs receive only 3'-terminal CCA, unstable tRNAs are marked with CCACCA and rapidly degraded. In Cupriavidus pinatubonensis (strain JMP 134 / LMG 1197) (Cupriavidus necator (strain JMP 134)), this protein is Multifunctional CCA protein.